A 228-amino-acid chain; its full sequence is NAD(P)H-hydrate epimerase (228 aa).

One can recognise a YjeF N-terminal domain in the interval 9-214 (AQNIDQELFN…DLLLKKYELE (206 aa)). 60-64 (NNGGD) is a binding site for (6S)-NADPHX. K(+)-binding residues include N61 and D125. (6S)-NADPHX-binding positions include 129-135 (GFSFKGE) and D158. S161 lines the K(+) pocket.

This sequence belongs to the NnrE/AIBP family. The cofactor is K(+).

The enzyme catalyses (6R)-NADHX = (6S)-NADHX. The catalysed reaction is (6R)-NADPHX = (6S)-NADPHX. Catalyzes the epimerization of the S- and R-forms of NAD(P)HX, a damaged form of NAD(P)H that is a result of enzymatic or heat-dependent hydration. This is a prerequisite for the S-specific NAD(P)H-hydrate dehydratase to allow the repair of both epimers of NAD(P)HX. The polypeptide is NAD(P)H-hydrate epimerase (Nematostella vectensis (Starlet sea anemone)).